A 173-amino-acid chain; its full sequence is Mitochondrial holo-[acyl-carrier-protein] synthase (173 aa).

It belongs to the P-Pant transferase superfamily. AcpS family.

The protein localises to the mitochondrion. It carries out the reaction apo-[ACP] + CoA = holo-[ACP] + adenosine 3',5'-bisphosphate + H(+). Functionally, transfers the 4'-phosphopantetheine moiety from coenzyme A to a Ser of mitochondrial acyl-carrier-protein. In Saccharomyces cerevisiae (strain ATCC 204508 / S288c) (Baker's yeast), this protein is Mitochondrial holo-[acyl-carrier-protein] synthase (PPT2).